The primary structure comprises 205 residues: Fibrillarin-like rRNA/tRNA 2'-O-methyltransferase (205 aa).

S-adenosyl-L-methionine contacts are provided by residues 60-61, 76-77, 101-102, and 121-124; these read ST, EF, DA, and DIAQ.

This sequence belongs to the methyltransferase superfamily. Fibrillarin family. As to quaternary structure, interacts with nop5. Component of box C/D small ribonucleoprotein (sRNP) particles that contain rpl7ae, FlpA and nop5, plus a guide RNA.

In terms of biological role, involved in pre-rRNA and tRNA processing. Utilizes the methyl donor S-adenosyl-L-methionine to catalyze the site-specific 2'-hydroxyl methylation of ribose moieties in rRNA and tRNA. Site specificity is provided by a guide RNA that base pairs with the substrate. Methylation occurs at a characteristic distance from the sequence involved in base pairing with the guide RNA. This chain is Fibrillarin-like rRNA/tRNA 2'-O-methyltransferase, found in Methanospirillum hungatei JF-1 (strain ATCC 27890 / DSM 864 / NBRC 100397 / JF-1).